The sequence spans 314 residues: Very long chain fatty acid elongase 4 (314 aa).

Residue N20 is glycosylated (N-linked (GlcNAc...) asparagine). 7 helical membrane passes run 42–62 (LMQS…FVWL), 78–98 (VLII…RELF), 127–147 (ALWW…FFIL), 165–185 (MFTL…FFGA), 188–208 (NSFI…GPWI), 217–237 (YLTM…ALSL), and 247–267 (MHWA…NFYI). The segment at 275–314 (KPKAGKTAMNGISANGVSKSEKQLMIENGKKQKNGKAKGD) is disordered. Basic and acidic residues predominate over residues 293–304 (KSEKQLMIENGK). Over residues 305-314 (KQKNGKAKGD) the composition is skewed to basic residues. Residues 310–314 (KAKGD) carry the Di-lysine motif motif.

Belongs to the ELO family. ELOVL4 subfamily. In terms of assembly, oligomer. N-glycosylated. As to expression, expressed in the retina and at much lower level in the brain. Ubiquitous, highest expression in thymus, followed by testis, small intestine, ovary, and prostate. Little or no expression in heart, lung, liver, or leukocates.

Its subcellular location is the endoplasmic reticulum membrane. It catalyses the reaction a very-long-chain acyl-CoA + malonyl-CoA + H(+) = a very-long-chain 3-oxoacyl-CoA + CO2 + CoA. It carries out the reaction tetracosanoyl-CoA + malonyl-CoA + H(+) = 3-oxohexacosanoyl-CoA + CO2 + CoA. The enzyme catalyses hexacosanoyl-CoA + malonyl-CoA + H(+) = 3-oxooctacosanyol-CoA + CO2 + CoA. The catalysed reaction is octacosanoyl-CoA + malonyl-CoA + H(+) = 3-oxo-triacontanoyl-CoA + CO2 + CoA. It catalyses the reaction triacontanoyl-CoA + malonyl-CoA + H(+) = 3-oxo-dotriacontanoyl-CoA + CO2 + CoA. It carries out the reaction (19Z,22Z,25Z,28Z,31Z)-tetratriacontapentaenoyl-CoA + malonyl-CoA + H(+) = 3-oxo-(21Z,24Z,27Z,30Z,33Z)-hexatriacontapentaenoyl-CoA + CO2 + CoA. The enzyme catalyses (4Z,7Z,10Z,13Z,16Z,19Z)-docosahexaenoyl-CoA + malonyl-CoA + H(+) = 3-oxo-(6Z,9Z,12Z,15Z,18Z,21Z)-tetracosahexaenoyl-CoA + CO2 + CoA. The catalysed reaction is (7Z,10Z,13Z,16Z)-docosatetraenoyl-CoA + malonyl-CoA + H(+) = (9Z,12Z,15Z,18Z)-3-oxotetracosatetraenoyl-CoA + CO2 + CoA. It catalyses the reaction (11Z,14Z,17Z,20Z,23Z)-hexacosapentaenoyl-CoA + malonyl-CoA + H(+) = 3-oxo-(13Z,16Z,19Z,22Z,25Z)-octacosapentaenoyl-CoA + CO2 + CoA. It carries out the reaction (13Z,16Z,19Z,22Z,25Z)-octacosapentaenoyl-CoA + malonyl-CoA + H(+) = 3-oxo-(15Z,18Z,21Z,24Z,27Z)-triacontapentaenoyl-CoA + CO2 + CoA. The enzyme catalyses (15Z,18Z,21Z,24Z,27Z)-triacontapentaenoyl-CoA + malonyl-CoA + H(+) = 3-oxo-(17Z,20Z,23Z,26Z,29Z)-dotriacontapentaenoyl-CoA + CO2 + CoA. The catalysed reaction is (17Z,20Z,23Z,26Z,29Z)-dotriacontapentaenoyl-CoA + malonyl-CoA + H(+) = 3-oxo-(19Z,22Z,25Z,28Z,31Z)-tetratriacontapentaenoyl-CoA + CO2 + CoA. It catalyses the reaction (21Z,24Z,27Z,30Z,33Z)-hexatriacontapentaenoyl-CoA + malonyl-CoA + H(+) = 3-oxo-(23Z,26Z,29Z,32Z,35Z)-octatriacontapentaenoyl-CoA + CO2 + CoA. It carries out the reaction (11Z,14Z,17Z,20Z)-hexacosatetraenoyl-CoA + malonyl-CoA + H(+) = (13Z,16Z,19Z,22Z)-3-oxooctacosatetraenoyl-CoA + CO2 + CoA. The enzyme catalyses (13Z,16Z,19Z,22Z)-octacosatetraenoyl-CoA + malonyl-CoA + H(+) = 3-oxo-(15Z,18Z,21Z,24Z)-triacontatetraenoyl-CoA + CO2 + CoA. The catalysed reaction is (15Z,18Z,21Z,24Z)-triacontatetraenoyl-CoA + malonyl-CoA + H(+) = 3-oxo-(17Z,20Z,23Z,26Z)-dotriacontatetraenoyl-CoA + CO2 + CoA. It catalyses the reaction (17Z,20Z,23Z,26Z)-dotriacontatetraenoyl-CoA + malonyl-CoA + H(+) = 3-oxo-(19Z,22Z,25Z,28Z)-tetratriacontatetraenoyl-CoA + CO2 + CoA. It carries out the reaction (19Z,22Z,25Z,28Z)-tetratriacontatetraenoyl-CoA + malonyl-CoA + H(+) = 3-oxo-(21Z,24Z,27Z,30Z)-hexatriacontatetraenoyl-CoA + CO2 + CoA. The enzyme catalyses (21Z,24Z,27Z,30Z)-hexatriacontatetraenoyl-CoA + malonyl-CoA + H(+) = 3-oxo-(23Z,26Z,29Z,32Z)-octatriacontatetraenoyl-CoA + CO2 + CoA. The catalysed reaction is (6Z,9Z,12Z,15Z,18Z,21Z)-tetracosahexaenoyl-CoA + malonyl-CoA + H(+) = 3-oxo-(8Z,11Z,14Z,17Z,20Z,23Z)-hexacosahexaenoyl-CoA + CO2 + CoA. It catalyses the reaction (8Z,11Z,14Z,17Z,20Z,23Z)-hexacosahexaenoyl-CoA + malonyl-CoA + H(+) = 3-oxo-(10Z,13Z,16Z,19Z,22Z,25Z)-octacosahexaenoyl-CoA + CO2 + CoA. It carries out the reaction (10Z,13Z,16Z,19Z,22Z,25Z)-octacosahexaenoyl-CoA + malonyl-CoA + H(+) = 3-oxo-(12Z,15Z,18Z,21Z,24Z,27Z)-triacontahexaenoyl-CoA + CO2 + CoA. The enzyme catalyses (12Z,15Z,18Z,21Z,24Z,27Z)-triacontahexaenoyl-CoA + malonyl-CoA + H(+) = 3-oxo-(14Z,17Z,20Z,23Z,26Z,29Z)-dotriacontahexaenoyl-CoA + CO2 + CoA. The catalysed reaction is (14Z,17Z,20Z,23Z,26Z,29Z)-dotriacontahexaenoyl-CoA + malonyl-CoA + H(+) = 3-oxo-(16Z,19Z,22Z,25Z,28Z,31Z)-tetratriacontahexaenoyl-CoA + CO2 + CoA. It catalyses the reaction (16Z,19Z,22Z,25Z,28Z,31Z)-tetratriacontahexaenoyl-CoA + malonyl-CoA + H(+) = 3-oxo-(18Z,21Z,24Z,27Z,30Z,33Z)-hexatriacontahexaenoyl-CoA + CO2 + CoA. It carries out the reaction (9Z,12Z,15Z,18Z,21Z)-tetracosapentaenoyl-CoA + malonyl-CoA + H(+) = 3-oxo-(11Z,14Z,17Z,20Z,23Z)-hexacosapentaenoyl-CoA + CO2 + CoA. The protein operates within lipid metabolism; fatty acid biosynthesis. Functionally, catalyzes the first and rate-limiting reaction of the four reactions that constitute the long-chain fatty acids elongation cycle. This endoplasmic reticulum-bound enzymatic process allows the addition of 2 carbons to the chain of long- and very long-chain fatty acids (VLCFAs) per cycle. Condensing enzyme that catalyzes the synthesis of very long chain saturated (VLC-SFA) and polyunsaturated (PUFA) fatty acids that are involved in multiple biological processes as precursors of membrane lipids and lipid mediators. May play a critical role in early brain and skin development. This Homo sapiens (Human) protein is Very long chain fatty acid elongase 4.